The sequence spans 253 residues: Demethylmenaquinone methyltransferase (253 aa).

Residues T62, D80, 102-103 (DA), and S119 each bind S-adenosyl-L-methionine.

Belongs to the class I-like SAM-binding methyltransferase superfamily. MenG/UbiE family.

It carries out the reaction a 2-demethylmenaquinol + S-adenosyl-L-methionine = a menaquinol + S-adenosyl-L-homocysteine + H(+). It participates in quinol/quinone metabolism; menaquinone biosynthesis; menaquinol from 1,4-dihydroxy-2-naphthoate: step 2/2. In terms of biological role, methyltransferase required for the conversion of demethylmenaquinol (DMKH2) to menaquinol (MKH2). The polypeptide is Demethylmenaquinone methyltransferase (Paenarthrobacter aurescens (strain TC1)).